Reading from the N-terminus, the 543-residue chain is Serine/threonine-protein kinase PkaA (543 aa).

Residues 8–276 (YLLEEPLGRG…ENLARGLRVV (269 aa)) form the Protein kinase domain. ATP is bound by residues 14–22 (LGRGATGTV) and lysine 48. Residue aspartate 142 is the Proton acceptor of the active site. The segment at 303 to 480 (PAPAQVPGAP…RQRSANPMRI (178 aa)) is disordered. A compositionally biased stretch (pro residues) spans 352-361 (VMPPVPPGQP). 2 stretches are compositionally biased toward low complexity: residues 407-420 (RQVS…RQAP) and 428-451 (PGYG…QPQR). Residues 452 to 461 (YAPPPAPEPQ) show a composition bias toward pro residues.

Belongs to the protein kinase superfamily. Ser/Thr protein kinase family. In terms of processing, autophosphorylated mainly at Thr and slightly at Ser.

The catalysed reaction is L-seryl-[protein] + ATP = O-phospho-L-seryl-[protein] + ADP + H(+). It catalyses the reaction L-threonyl-[protein] + ATP = O-phospho-L-threonyl-[protein] + ADP + H(+). This Streptomyces coelicolor (strain ATCC BAA-471 / A3(2) / M145) protein is Serine/threonine-protein kinase PkaA (pkaA).